Reading from the N-terminus, the 466-residue chain is Transcription factor SOX-10 (466 aa).

Disordered regions lie at residues 1-67 (MAEE…DDDK), 160-200 (LRMQ…QGGA), 213-275 (DHRH…DFGN), 344-375 (TVSP…QPST), and 433-466 (RPLY…LSRP). Positions 23-32 (LSPGSAPSLG) are enriched in low complexity. Phosphoserine is present on Ser-24. Residues 62–102 (EADDDKFPVCIREAVSQVLSGYDWTLVPMPVRVNGASKSKP) form a dimerization (DIM) region. A DNA-binding region (HMG box) is located at residues 104-172 (VKRPMNAFMV…QHKKDHPDYK (69 aa)). The segment covering 160–173 (LRMQHKKDHPDYKY) has biased composition (basic and acidic residues). Residues 183-200 (AAQGEAECPGGEAEQGGA) are compositionally biased toward low complexity. Residues 228-310 (PEHPSGQSHG…LPPNGHPGHV (83 aa)) are transactivation domain (TAM). The span at 254–271 (ADPKRDGRSLGEGGKPHI) shows a compositional bias: basic and acidic residues. The segment at 353–466 (KAQVKTETTG…QPVYTTLSRP (114 aa)) is transactivation domain (TAC). Polar residues predominate over residues 440–466 (SDPSPSGPQSHSPTHWEQPVYTTLSRP).

Monomer. Interacts with Armcx3 at the mitochondrial outer membrane surface. Interacts with PAX3. In terms of tissue distribution, expressed in oligodendroglia of the spinal tube (at protein level).

The protein localises to the cytoplasm. The protein resides in the nucleus. It is found in the mitochondrion outer membrane. Its function is as follows. Transcription factor that plays a central role in developing and mature glia. Specifically activates expression of myelin genes, during oligodendrocyte (OL) maturation, such as DUSP15 and MYRF, thereby playing a central role in oligodendrocyte maturation and CNS myelination. Once induced, MYRF cooperates with SOX10 to implement the myelination program. Transcriptional activator of MITF, acting synergistically with PAX3. Transcriptional activator of MBP, via binding to the gene promoter. The protein is Transcription factor SOX-10 (Sox10) of Mus musculus (Mouse).